The primary structure comprises 723 residues: MGSRCALALAVLSALLCQVWSSGVFELKLQEFVNKKGLLGNRNCCRGGAGPPPCACRTFFRVCLKHYQASVSPEPPCTYGSAVTPVLGVDSFSLPDGGGADSAFSNPIRFPFGFTWPGTFSLIIEALHTDSPDDLATENPERLISRLATQRHLTVGEEWSQDLHSSGRTDLKYSYRFVCDEHYYGEGCSVFCRPRDDAFGHFTCGERGEKVCNPGWKGPYCTEPICLPGCDEQHGFCDKPGECKCRVGWQGRYCDECIRYPGCLHGTCQQPWQCNCQEGWGGLFCNQDLNYCTHHKPCKNGATCTNTGQGSYTCSCRPGYTGATCELGIDECDPSPCKNGGSCTDLENSYSCTCPPGFYGKICELSAMTCADGPCFNGGRCSDSPDGGYSCRCPVGYSGFNCEKKIDYCSSSPCSNGAKCVDLGDAYLCRCQAGFSGRHCDDNVDDCASSPCANGGTCRDGVNDFSCTCPPGYTGRNCSAPVSRCEHAPCHNGATCHERGHRYVCECARGYGGPNCQFLLPELPPGPAVVDLTEKLEGQGGPFPWVAVCAGVILVLMLLLGCAAVVVCVRLRLQKHRPPADPCRGETETMNNLANCQREKDISVSIIGATQIKNTNKKADFHGDHSADKNGFKARYPAVDYNLVQDLKGDDTAVRDAHSKRDTKCQPQGSSGEEKGTPTTLRGGEASERKRPDSGCSTSKDTKYQSVYVISEEKDECVIATEV.

The first 17 residues, 1–17 (MGSRCALALAVLSALLC), serve as a signal peptide directing secretion. The Extracellular portion of the chain corresponds to 18 to 545 (QVWSSGVFEL…LEGQGGPFPW (528 aa)). In terms of domain architecture, DSL spans 177 to 221 (FVCDEHYYGEGCSVFCRPRDDAFGHFTCGERGEKVCNPGWKGPYC). 27 disulfides stabilise this stretch: C179–C188, C192–C204, C212–C221, C226–C237, C230–C243, C245–C254, C257–C268, C263–C274, C276–C285, C292–C304, C298–C314, C316–C325, C332–C343, C337–C352, C354–C363, C370–C381, C375–C391, C393–C402, C409–C420, C414–C429, C431–C440, C447–C458, C452–C467, C469–C478, C485–C496, C490–C505, and C507–C516. 3 consecutive EGF-like domains span residues 226 to 254 (CLPG…GRYC), 257 to 285 (CIRY…GLFC), and 292 to 325 (CTHH…GATC). Residues 332 to 363 (CDPSPCKNGGSCTDLENSYSCTCPPGFYGKIC) enclose the EGF-like 4; calcium-binding domain. 2 EGF-like domains span residues 370-402 (CADG…GFNC) and 409-440 (CSSS…GRHC). Positions 447–478 (CASSPCANGGTCRDGVNDFSCTCPPGYTGRNC) constitute an EGF-like 7; calcium-binding domain. The N-linked (GlcNAc...) asparagine glycan is linked to N477. In terms of domain architecture, EGF-like 8 spans 485-516 (CEHAPCHNGATCHERGHRYVCECARGYGGPNC). Residues 546 to 568 (VAVCAGVILVLMLLLGCAAVVVC) form a helical membrane-spanning segment. The Cytoplasmic portion of the chain corresponds to 569–723 (VRLRLQKHRP…KDECVIATEV (155 aa)). K613 is covalently cross-linked (Glycyl lysine isopeptide (Lys-Gly) (interchain with G-Cter in ubiquitin)). The segment covering 653–664 (AVRDAHSKRDTK) has biased composition (basic and acidic residues). The segment at 653–702 (AVRDAHSKRDTKCQPQGSSGEEKGTPTTLRGGEASERKRPDSGCSTSKDT) is disordered. The residue at position 694 (S694) is a Phosphoserine; by PKB. S697 carries the phosphoserine modification. The segment at 720 to 723 (ATEV) is interaction with MAGI1.

In terms of assembly, homodimer. Interacts with TJP1. Interacts with MAGI1 (via PDZ domain); forms a complex with CTNNB1 and CDH2 and promotes recruitment to the adherens junction and stabilization on the cell surface. Interacts with PSEN1; undergoes a presenilin-dependent gamma-secretase cleavage that releases a Dll1-intracellular form. Interacts with MFAP5. Interacts with MIB1. Interacts with NEURL1B; leads to ubiquitination. Interacts with NEURL1. Interacts with SYNJ2BP; enhances DLL1 protein stability, and promotes Notch signaling in endothelial cells. Interacts with MAGI1, MAGI2, MAGI3 and MPDZ. Interacts (via ubiquitin) with EPN1 (via IUM domain); binding with NOTCH1 attached to neighboring cell, promotes ligand ubiquitination and EPN1 interaction, leading to NECD transendocytosis and Notch signaling. Interacts with NOTCH1. Interacts with NOTCH2NLB; leading to promote Notch signaling pathway in a cell-autonomous manner through inhibition of cis DLL1-NOTCH2 interactions. Ubiquitinated by MIB (MIB1 or MIB2), leading to its endocytosis and subsequent degradation. Ubiquitinated; promotes recycling back to the plasma membrane and confers a strong affinity for NOTCH1. Multi-ubiquitination of Lys-613 by MIB1 promotes both cis and trans-interaction with NOTCH1, as well as activation of Notch signaling. Ubiquitinated by NEURL1B. Post-translationally, phosphorylated in a membrane association-dependent manner. Phosphorylation at Ser-697 requires the presence of Ser-694, whereas phosphorylation at Ser-694 occurs independently of the other site. Phosphorylation is required for full ligand activity in vitro and affects surface presentation, ectodomain shedding, and endocytosis. In terms of processing, O-fucosylated. Can be elongated to a disaccharide by MFNG. As to expression, expressed in heart and pancreas, with lower expression in brain and muscle and almost no expression in placenta, lung, liver and kidney.

The protein localises to the apical cell membrane. It is found in the cell junction. Its subcellular location is the adherens junction. The protein resides in the membrane raft. Functionally, transmembrane ligand protein of NOTCH1, NOTCH2 and NOTCH3 receptors that binds the extracellular domain (ECD) of Notch receptor in a cis and trans fashion manner. Following transinteraction, ligand cells produce mechanical force that depends of a clathrin-mediated endocytosis, requiring ligand ubiquitination, EPN1 interaction, and actin polymerisation; these events promote Notch receptor extracellular domain (NECD) transendocytosis and triggers Notch signaling through induction of cleavage, hyperphosphorylation, and nuclear accumulation of the intracellular domain of Notch receptors (NICD). Is required for embryonic development and maintenance of adult stem cells in many different tissues and immune systeme; the DLL1-induced Notch signaling is mediated through an intercellular communication that regulates cell lineage, cell specification, cell patterning and morphogenesis through effects on differentiation and proliferation. Plays a role in brain development at different level, namely by regulating neuronal differentiation of neural precursor cells via cell-cell interaction, most likely through the lateral inhibitory system in an endogenous level dependent-manner. During neocortex development, Dll1-Notch signaling transmission is mediated by dynamic interactions between intermediate neurogenic progenitors and radial glia; the cell-cell interactions are mediated via dynamic and transient elongation processes, likely to reactivate/maintain Notch activity in neighboring progenitors, and coordinate progenitor cell division and differentiation across radial and zonal boundaries. During cerebellar development, regulates Bergmann glial monolayer formation and its morphological maturation through a Notch signaling pathway. At the retina and spinal cord level, regulates neurogenesis by preventing the premature differentiation of neural progenitors and also by maintaining progenitors in spinal cord through Notch signaling pathway. Also controls neurogenesis of the neural tube in a progenitor domain-specific fashion along the dorsoventral axis. Maintains quiescence of neural stem cells and plays a role as a fate determinant that segregates asymmetrically to one daughter cell during neural stem cells mitosis, resulting in neuronal differentiation in Dll1-inheriting cell. Plays a role in immune systeme development, namely the development of all T-cells and marginal zone (MZ) B-cells. Blocks the differentiation of progenitor cells into the B-cell lineage while promoting the emergence of a population of cells with the characteristics of a T-cell/NK-cell precursor. Also plays a role during muscle development. During early development, inhibits myoblasts differentiation from the medial dermomyotomal lip and later regulates progenitor cell differentiation. Directly modulates cell adhesion and basal lamina formation in satellite cells through Notch signaling. Maintains myogenic progenitors pool by suppressing differentiation through down-regulation of MYOD1 and is required for satellite cell homing and PAX7 expression. During craniofacial and trunk myogenesis suppresses differentiation of cranial mesoderm-derived and somite-derived muscle via MYOD1 regulation but in cranial mesoderm-derived progenitors, is neither required for satellite cell homing nor for PAX7 expression. Also plays a role during pancreatic cell development. During type B pancreatic cell development, may be involved in the initiation of proximodistal patterning in the early pancreatic epithelium. Stimulates multipotent pancreatic progenitor cells proliferation and pancreatic growth by maintaining HES1 expression and PTF1A protein levels. During fetal stages of development, is required to maintain arterial identity and the responsiveness of arterial endothelial cells for VEGFA through regulation of KDR activation and NRP1 expression. Controls sprouting angiogenesis and subsequent vertical branch formation through regulation on tip cell differentiation. Negatively regulates goblet cell differentiation in intestine and controls secretory fat commitment through lateral inhibition in small intestine. Plays a role during inner ear development; negatively regulates auditory hair cell differentiation. Plays a role during nephron development through Notch signaling pathway. Regulates growth, blood pressure and energy homeostasis. The chain is Delta-like protein 1 from Homo sapiens (Human).